The sequence spans 286 residues: Shikimate dehydrogenase (NADP(+)) (286 aa).

Residues 20–22 (SLS) and Thr-67 contribute to the shikimate site. The active-site Proton acceptor is the Lys-71. 2 residues coordinate shikimate: Asn-92 and Asp-107. Residues 132–136 (GAGGA) and Met-228 each bind NADP(+). Tyr-230 lines the shikimate pocket. Gly-251 is an NADP(+) binding site.

The protein belongs to the shikimate dehydrogenase family. In terms of assembly, homodimer.

The catalysed reaction is shikimate + NADP(+) = 3-dehydroshikimate + NADPH + H(+). It functions in the pathway metabolic intermediate biosynthesis; chorismate biosynthesis; chorismate from D-erythrose 4-phosphate and phosphoenolpyruvate: step 4/7. Functionally, involved in the biosynthesis of the chorismate, which leads to the biosynthesis of aromatic amino acids. Catalyzes the reversible NADPH linked reduction of 3-dehydroshikimate (DHSA) to yield shikimate (SA). This is Shikimate dehydrogenase (NADP(+)) from Geobacter metallireducens (strain ATCC 53774 / DSM 7210 / GS-15).